The sequence spans 303 residues: Sulfotransferase 6B1 (303 aa).

65 to 70 (KCGSNW) lines the 3'-phosphoadenylyl sulfate pocket. Histidine 118 serves as the catalytic Proton acceptor. 3'-phosphoadenylyl sulfate-binding positions include arginine 140, serine 148, tyrosine 203, 237–242 (STFQAM), and 259–261 (RKG).

Belongs to the sulfotransferase 1 family.

It is found in the cytoplasm. The protein resides in the cytosol. The enzyme catalyses thyroxine + 3'-phosphoadenylyl sulfate = thyroxine sulfate + adenosine 3',5'-bisphosphate + H(+). In terms of biological role, sulfotransferase that utilizes 3'-phospho-5'-adenylyl sulfate (PAPS) as sulfonate donor to catalyze the sulfate conjugation of thyroxine. Involved in the metabolism of thyroxine. In Gorilla gorilla gorilla (Western lowland gorilla), this protein is Sulfotransferase 6B1 (SULT6B1).